Reading from the N-terminus, the 82-residue chain is Putative antitoxin RelB1 (82 aa).

In terms of biological role, antitoxin component of a type II toxin-antitoxin (TA) system. Its cognate toxin is RelE1 (Potential). This is Putative antitoxin RelB1 (relB1) from Methanocaldococcus jannaschii (strain ATCC 43067 / DSM 2661 / JAL-1 / JCM 10045 / NBRC 100440) (Methanococcus jannaschii).